The sequence spans 186 residues: UPF0301 protein PM1869 (186 aa).

It belongs to the UPF0301 (AlgH) family.

In Pasteurella multocida (strain Pm70), this protein is UPF0301 protein PM1869.